The primary structure comprises 337 residues: Glyceraldehyde-3-phosphate dehydrogenase (337 aa).

Residues 12–13 (RI), Asp34, and Lys79 each bind NAD(+). D-glyceraldehyde 3-phosphate-binding positions include 150–152 (SCT), Thr181, 210–211 (TG), and Arg233. Cys151 functions as the Nucleophile in the catalytic mechanism. Asn315 is a binding site for NAD(+).

Belongs to the glyceraldehyde-3-phosphate dehydrogenase family. In terms of assembly, homotetramer.

It localises to the cytoplasm. The enzyme catalyses D-glyceraldehyde 3-phosphate + phosphate + NAD(+) = (2R)-3-phospho-glyceroyl phosphate + NADH + H(+). Its pathway is carbohydrate degradation; glycolysis; pyruvate from D-glyceraldehyde 3-phosphate: step 1/5. In Schizophyllum commune (Split gill fungus), this protein is Glyceraldehyde-3-phosphate dehydrogenase (GPD).